Consider the following 728-residue polypeptide: Bacteriophytochrome (728 aa).

Cys-12 serves as a coordination point for a tetrapyrrole. A chromophore binding domain region spans residues 17-495; that stretch reads IHVPGAIQPH…RLDLMELCLN (479 aa). Positions 139-303 constitute a GAF domain; it reads DTASLLSNVT…IFSQVCSAIV (165 aa). The Histidine kinase domain occupies 510 to 721; it reads VLGHDLRNPL…TFCLRLPVRQ (212 aa). At His-513 the chain carries Phosphohistidine; by autocatalysis.

This sequence in the N-terminal section; belongs to the phytochrome family. Contains one covalently linked tetrapyrrole chromophore.

It catalyses the reaction ATP + protein L-histidine = ADP + protein N-phospho-L-histidine.. Photoreceptor which exists in two forms that are reversibly interconvertible by light: the R form that absorbs maximally in the red region of the spectrum and the FR form that absorbs maximally in the far-red region. The sequence is that of Bacteriophytochrome (bphP) from Pseudomonas aeruginosa (strain ATCC 15692 / DSM 22644 / CIP 104116 / JCM 14847 / LMG 12228 / 1C / PRS 101 / PAO1).